Here is a 1168-residue protein sequence, read N- to C-terminus: Protein VARIATION IN COMPOUND TRIGGERED ROOT growth response (1168 aa).

One can recognise a TIR domain in the interval 10–171 (WVYDVFLSFS…EIANDVLAKL (162 aa)). Glutamate 85 is a catalytic residue. The 266-residue stretch at 187–452 (EDHIANMSVL…ACLFNHVKVR (266 aa)) folds into the NB-ARC domain. 10 LRR repeats span residues 539–562 (TSKVSEFCVHENAFKGMGNLLFLD), 606–629 (LRNLVKLEMHDSKLEKLWEGAMSF), 631–653 (CLKELDMWASKYLKEIPDLSKAT), 676–699 (LNKLLELNMEYCGELETLPTGFNL), 701–720 (SLDYLNFNECWKLRTFPEFA), 721–744 (TNISNLILAETSIEEYPSNLYFKN), 795–820 (LNNLERLDICYCRNLESLPTGINLES), 839–865 (STNIKYLDLDQTGIEEVPWQIENFFNL), 873–896 (CRELKCVSLNIFKLKHLGEVSFSN), and 1065–1089 (NVPLSQLNYDHVDINIHITSGDWRS).

This sequence belongs to the disease resistance NB-LRR family. Part of a nuclear protein complex made of VICTR, PAD4 and EDS1. Interacts (via TIR domain) with PAD4 and EDS1.

Its subcellular location is the cytoplasm. It localises to the nucleus. The enzyme catalyses NAD(+) + H2O = ADP-D-ribose + nicotinamide + H(+). Its function is as follows. Disease resistance protein of the TIR-NB-LRR-type. Part of the RPS6 locus that contains a cluster of several paralogous disease resistance (R) genes. Resistance proteins guard the plant against pathogens that contain an appropriate avirulence protein via an indirect interaction with this avirulence protein. That triggers a defense system including the hypersensitive response, which restricts the pathogen growth. Required for [5-(3,4-dichlorophenyl)furan-2-yl]-piperidine-1-ylmethanethione-(DFPM-) induced root growth arrest due to reduced number of meristem cells in the division zone of the primary root and inhibition of abscisic acid- (ABA-) induced stomatal closing. This chain is Protein VARIATION IN COMPOUND TRIGGERED ROOT growth response (VICTR), found in Arabidopsis thaliana (Mouse-ear cress).